Here is a 445-residue protein sequence, read N- to C-terminus: METIFAQSSAFGKAGVAVFRISGPKSLEVLQLLTGRKDFKPRLMYYQQIIVPETNELIDNAMVVYFKLPNSFTGEDVVEIHTHGSKAISIMLINTLLNIADIRLAEAGEFTKRAFLNNKFDLTAAEGIADLINAETIMQHRQAVRQANGGLKELYNKWRNQLLKIISLLEAYIDFPDEDIPESILNDVNNTHKNIVNEISNYLNDNRRGELLNNGLKLAIIGPPNTGKSSLLNFLMQRNIAIVSNIAGTTRDIIEGHLDIGGYPIILQDTAGIRTESTDIIEQEGIKRAINSAKTANIKIVMFDAEKLDSSINNDITGLIDENTIVIINKIDLIEPNKTFAIENRYKCLRVSVKNNIALSNILKNIENIAENLAGVTETPYITNQRHRHYLKQALSHLIDFNLDNDLVLATEDIRMTVRCIGLITGVINVEEILNEIFKNFCIGK.

Residues Arg-20, Glu-79, and Lys-119 each coordinate (6S)-5-formyl-5,6,7,8-tetrahydrofolate. Positions 215–371 (GLKLAIIGPP…ILKNIENIAE (157 aa)) constitute a TrmE-type G domain. Asn-225 serves as a coordination point for K(+). Residues 225–230 (NTGKSS), 244–250 (SNIAGTT), and 269–272 (DTAG) contribute to the GTP site. Position 229 (Ser-229) interacts with Mg(2+). Ser-244, Ile-246, and Thr-249 together coordinate K(+). Residue Thr-250 coordinates Mg(2+). Lys-445 provides a ligand contact to (6S)-5-formyl-5,6,7,8-tetrahydrofolate.

Belongs to the TRAFAC class TrmE-Era-EngA-EngB-Septin-like GTPase superfamily. TrmE GTPase family. Homodimer. Heterotetramer of two MnmE and two MnmG subunits. K(+) serves as cofactor.

The protein localises to the cytoplasm. Exhibits a very high intrinsic GTPase hydrolysis rate. Involved in the addition of a carboxymethylaminomethyl (cmnm) group at the wobble position (U34) of certain tRNAs, forming tRNA-cmnm(5)s(2)U34. The protein is tRNA modification GTPase MnmE of Rickettsia prowazekii (strain Madrid E).